Reading from the N-terminus, the 245-residue chain is Carboxy-S-adenosyl-L-methionine synthase (245 aa).

S-adenosyl-L-methionine-binding positions include Y42, 67–69 (GCS), 92–93 (DN), 120–121 (DI), N135, and R202.

It belongs to the class I-like SAM-binding methyltransferase superfamily. Cx-SAM synthase family. In terms of assembly, homodimer.

The catalysed reaction is prephenate + S-adenosyl-L-methionine = carboxy-S-adenosyl-L-methionine + 3-phenylpyruvate + H2O. In terms of biological role, catalyzes the conversion of S-adenosyl-L-methionine (SAM) to carboxy-S-adenosyl-L-methionine (Cx-SAM). This is Carboxy-S-adenosyl-L-methionine synthase from Vibrio vulnificus (strain YJ016).